Reading from the N-terminus, the 738-residue chain is Outer membrane protein assembly factor BamA (738 aa).

The signal sequence occupies residues 1–13; sequence MVWLLFLSSFCFA. POTRA domains are found at residues 14 to 81, 82 to 159, 162 to 248, 251 to 329, and 332 to 404; these read DEVV…LQEN, PILR…VKEA, TVIR…LKEG, YSFG…VVST, and YRIR…VKER.

The protein belongs to the BamA family. In terms of assembly, part of the Bam complex.

Its subcellular location is the cell outer membrane. In terms of biological role, part of the outer membrane protein assembly complex, which is involved in assembly and insertion of beta-barrel proteins into the outer membrane. The protein is Outer membrane protein assembly factor BamA of Neorickettsia risticii (strain Illinois).